The sequence spans 191 residues: GTP cyclohydrolase 1 (191 aa).

C80, H83, and C151 together coordinate Zn(2+).

The protein belongs to the GTP cyclohydrolase I family. In terms of assembly, toroid-shaped homodecamer, composed of two pentamers of five dimers.

It carries out the reaction GTP + H2O = 7,8-dihydroneopterin 3'-triphosphate + formate + H(+). It participates in cofactor biosynthesis; 7,8-dihydroneopterin triphosphate biosynthesis; 7,8-dihydroneopterin triphosphate from GTP: step 1/1. This is GTP cyclohydrolase 1 from Nitrosospira multiformis (strain ATCC 25196 / NCIMB 11849 / C 71).